The primary structure comprises 786 residues: DNA repair and recombination protein RAD54-like (786 aa).

The interval 2–9 is required for chromatin remodeling, strand pairing activities and coupling of ATPase activity; sequence RRSLAPSQ. Position 22 is a phosphothreonine (Thr-22). The Helicase ATP-binding domain maps to 165–340; sequence EGKRGSFNGC…FSLVNFVNPE (176 aa). 178 to 185 lines the ATP pocket; the sequence is DEMGLGKT. The short motif at 291–294 is the DEGH box element; sequence DEGH. Residues 497-654 enclose the Helicase C-terminal domain; the sequence is LLDFMLAAIR…NNESVEKHFT (158 aa). Residues 738-786 are disordered; it reads EAKPAATTTDEDEELSDSKRKAKKTLASDDDDDEDFVLNCSSGEEFSGF. A compositionally biased stretch (polar residues) spans 776 to 786; the sequence is NCSSGEEFSGF.

It belongs to the SNF2/RAD54 helicase family. In terms of assembly, interacts (via N-terminus) with spn-A/Rad51.

It is found in the nucleus. Functionally, involved in mitotic DNA repair and meiotic recombination. Functions in the recombinational DNA repair pathway. Essential for interhomolog gene conversion (GC), but may have a less important role in intersister GC than spn-A/Rad51. In the presence of DNA, spn-A/Rad51 enhances the ATPase activity of okr/Rad54. In Drosophila grimshawi (Hawaiian fruit fly), this protein is DNA repair and recombination protein RAD54-like.